Reading from the N-terminus, the 448-residue chain is StAR-related lipid transfer protein 3 (448 aa).

Residues 47–219 (FSDVRRTFCL…YSPPESLAGS (173 aa)) form the MENTAL domain. 4 helical membrane passes run 53–73 (TFCL…IIEL), 96–116 (FFDI…GYAA), 122–142 (WWVI…KVIL), and 150–170 (AFGY…TWFL). Residues 208-214 (QFYSPPE) carry the FFAT motif. The START domain occupies 232–445 (AVTEQEKAFV…LRQRINEVHV (214 aa)).

Belongs to the STARD3 family. Homodimer. In terms of processing, phosphorylated. Phosphorylation allows the tethering of two membranes that participates in the formation of ER-endosome contacts. Phosphorylation of FFAT motif drives membrane tethering between the endoplasmic reticulum and late endosomes that in turn allows the efficient transport of sterol mediated by the START domain.

It localises to the late endosome membrane. The catalysed reaction is cholesterol(in) = cholesterol(out). Sterol-binding protein that mediates cholesterol transport from the endoplasmic reticulum to endosomes. The sterol transport mechanism is triggered by phosphorylation of FFAT motif that leads to membrane tethering between the endoplasmic reticulum and late endosomes. Acts as a lipid transfer protein that redirects sterol to the endosome at the expense of the cell membrane and favors membrane formation inside endosomes. The sequence is that of StAR-related lipid transfer protein 3 from Danio rerio (Zebrafish).